Here is a 185-residue protein sequence, read N- to C-terminus: Elongation factor P (185 aa).

This sequence belongs to the elongation factor P family.

It localises to the cytoplasm. The protein operates within protein biosynthesis; polypeptide chain elongation. Its function is as follows. Involved in peptide bond synthesis. Stimulates efficient translation and peptide-bond synthesis on native or reconstituted 70S ribosomes in vitro. Probably functions indirectly by altering the affinity of the ribosome for aminoacyl-tRNA, thus increasing their reactivity as acceptors for peptidyl transferase. The protein is Elongation factor P of Clostridioides difficile (strain 630) (Peptoclostridium difficile).